The sequence spans 868 residues: Receptor-like protein 32 (868 aa).

The N-terminal stretch at 1–32 is a signal peptide; that stretch reads MKDSWNSTSIIPFTFSSLIFFLFTFDFQDVFG. Over 33-815 the chain is Extracellular; the sequence is VPTKHLCRLE…PPELEEEDRE (783 aa). N-linked (GlcNAc...) asparagine glycosylation is found at Asn73, Asn109, Asn141, and Asn165. LRR repeat units follow at residues 118–142, 143–166, 168–188, 189–213, 214–237, 239–261, 262–285, 287–310, 312–334, 335–360, 362–385, 389–412, 413–436, 438–459, 465–489, 490–515, 517–538, 540–560, 561–586, 588–606, 607–630, 675–699, 700–723, 724–747, and 749–772; these read LRFLTTLDLSYNYFSGQIPSCIENF, SHLTTLDLSKNYFSGGIPSSIGNL, QLTFLDLSGNEFVGEMPFFGN, MNQLTNLYVDSNDLTGIFPLSLLNL, KHLSDLSLSRNQFTGTLPSNMSSL, NLEYFEAWGNAFTGTLPSSLFTI, ASLTSINLRNNQLNGTLEFGNISS, STLTVLDISNNNFIGPIPKSISKF, NLQDLDLSHLNTQGPVDFSIFTN, LKSLQLLNLSHLNTTTTIDLNALFSS, LNSIYSMDLSGNHVSATTKISVAD, TQLISQLYLSGCGITEFPELLRSQ, HKMTNLDISNNKIKGQVPGWLWTL, KLIFVDLSNNIFTGFERSTEHG, KPSMQYLVGSNNNFTGKIPSFICAL, RSLITLDLSDNNLNGSIPPCMGNLKS, LSFLNLRQNRLGGGLPRSIFKS, RSLDVGHNQLVGKLPRSFIRL, SALEVLNVENNRINDTFPFWLSSLKK, QVLVLRSNAFHGPIHHASF, HTLRIINLSHNQFSGTLPANYFVN, LKIYTALDFSENKLEGEIPRSIGLL, KELHVLNLSSNAFTGHIPSSMGNL, RELESLDVSQNKLSGEIPQELGNL, and YLAYMNFSHNQLGGLVPGGTQFRR. The N-linked (GlcNAc...) asparagine glycan is linked to Asn233. N-linked (GlcNAc...) asparagine glycans are attached at residues Asn275 and Asn282. 2 N-linked (GlcNAc...) asparagine glycosylation sites follow: Asn342 and Asn347. N-linked (GlcNAc...) asparagine glycans are attached at residues Asn477 and Asn503. Asn574 carries N-linked (GlcNAc...) asparagine glycosylation. Asn613 carries an N-linked (GlcNAc...) asparagine glycan. 4 N-linked (GlcNAc...) asparagine glycosylation sites follow: Asn706, Asn746, Asn754, and Asn774. A helical transmembrane segment spans residues 816–836; it reads VFSWIAAAIGFGPGIAFGLTI. Topologically, residues 837–868 are cytoplasmic; that stretch reads RYILVFYKPDWFMHTFGHLQPSAHEKRLRRKQ.

Belongs to the RLP family.

It is found in the cell membrane. The polypeptide is Receptor-like protein 32 (Arabidopsis thaliana (Mouse-ear cress)).